We begin with the raw amino-acid sequence, 327 residues long: Cysteine synthase (327 aa).

Lys65 is modified (N6-(pyridoxal phosphate)lysine). Pyridoxal 5'-phosphate contacts are provided by residues Asn95, 200-204, and Ser282; that span reads GTGGT.

This sequence belongs to the cysteine synthase/cystathionine beta-synthase family. It depends on pyridoxal 5'-phosphate as a cofactor.

It carries out the reaction O-acetyl-L-serine + hydrogen sulfide = L-cysteine + acetate. Its pathway is amino-acid biosynthesis; L-cysteine biosynthesis; L-cysteine from L-serine: step 2/2. The polypeptide is Cysteine synthase (cysM) (Aquifex aeolicus (strain VF5)).